The sequence spans 556 residues: MSSKPQIRPAENGEHCRSKMENGMDSMAPPTLSTYTPEEMVQQMKELITENNELKEAMKLHNQAMKDRYEELSIWREKQKEEREFYETKFKEAKQCLLAKCVENEQLQQQLQSLKEREEGAEMEGCATPEKEARQLKSKVQRLQAEKADLLAIISELQVKLNIASAEDSFVEIGMNEEVNRTARENQDNSSEMASNIAVYIRSKSADESKNLESEELTVSQLLCCLRNETQRREKLEKELQDHKERLSKMENETSNCLESGTQTNQEEESSEAIGSEVESLKKQICALFKELQEAHEKLKEAELIQKKLQEKCQTLEKVNSAAATELEEKQQLIYTIKKLELQVESVQAEVKLEQAKTQDEKTRYSSLQDAYNKLLAELTEAMKTISEMKVKEHDRVDKVVVEELNAKVLLAEQALAAKQLQMDEMKQLIAKQEEDLETMAVLRAQMEVYCSDFHAERAAREKIHEEKEQLAVQLAYLLKEQQNLEDLGRSSLAEMQNRHGARAPDREHSPRLVQRGTGSQEWPEQRNISIYSCPKCEEILPDLDTLQIHVMDCIN.

The interval 1–33 (MSSKPQIRPAENGEHCRSKMENGMDSMAPPTLS) is disordered. The span at 11–22 (ENGEHCRSKMEN) shows a compositional bias: basic and acidic residues. The stretch at 38-164 (EEMVQQMKEL…SELQVKLNIA (127 aa)) forms a coiled coil. Residues 168–173 (DSFVEI) carry the LIR motif. The stretch at 219 to 487 (VSQLLCCLRN…LLKEQQNLED (269 aa)) forms a coiled coil. A disordered region spans residues 245-274 (ERLSKMENETSNCLESGTQTNQEEESSEAI). The segment covering 253–265 (ETSNCLESGTQTN) has biased composition (polar residues). Residues 453 to 458 (DFHAER) carry the UBAN motif. The disordered stretch occupies residues 496–524 (MQNRHGARAPDREHSPRLVQRGTGSQEWP). The CCHC NOA-type zinc-finger motif lies at 526 to 556 (QRNISIYSCPKCEEILPDLDTLQIHVMDCIN). Zn(2+) is bound by residues Cys-534, Cys-537, His-550, and Cys-554.

In terms of assembly, binds to linear ubiquitin chains. Interacts with LC3 family members. Expressed in erythrocytes, skeletal muscle, heart, spleen and brain. Weakly expressed in lung and liver (at protein level).

It is found in the cytoplasm. Its subcellular location is the perinuclear region. The protein resides in the golgi apparatus. It localises to the trans-Golgi network. The protein localises to the cytoplasmic vesicle. It is found in the recycling endosome. Its subcellular location is the autophagosome. Functionally, probably part of the TNF-alpha signaling pathway that can shift the equilibrium toward induction of cell death. May act by regulating membrane trafficking and cellular morphogenesis. May act as autophagy receptor that interacts directly with both the cargo to become degraded and an autophagy modifier of the MAP1 LC3 family. In Gallus gallus (Chicken), this protein is Optineurin (OPTN).